The sequence spans 406 residues: Oligouridylate-binding protein 1 (406 aa).

2 consecutive RRM domains span residues 49–123 (RSVY…WAYA) and 134–212 (YNIF…WAAK). The interval 231 to 250 (TSGTSDDGQEKVVNEDAPEN) is disordered. Residues 255–329 (TTVYVGNLAP…KPVKCSWGSK (75 aa)) enclose the RRM 3 domain.

The protein resides in the nucleus. Functionally, heterogeneous nuclear ribonucleoprotein (hnRNP)-like protein that acts as a component of the pre-mRNA processing machinery. Functions to facilitate the nuclear maturation of plant pre-mRNAs. Binds with high affinity to RNA molecules that contain AU-rich regions. May bind to the 3'-UTR and protects the mRNA against exonucleolytic degradation. Associates with nuclear poly(A)+ RNA in nucleus in vivo. Does not stimulate transcription or the 3' end cleavage/polyadenylation reaction. This is Oligouridylate-binding protein 1 (UBP1) from Nicotiana plumbaginifolia (Leadwort-leaved tobacco).